The primary structure comprises 275 residues: Large ribosomal subunit protein uL2 (275 aa).

The disordered stretch occupies residues 223 to 260 (VAMNPVDHPHGGGEGRTSGGRHPVSPWGLPTKGYKTRS).

It belongs to the universal ribosomal protein uL2 family. As to quaternary structure, part of the 50S ribosomal subunit. Forms a bridge to the 30S subunit in the 70S ribosome.

In terms of biological role, one of the primary rRNA binding proteins. Required for association of the 30S and 50S subunits to form the 70S ribosome, for tRNA binding and peptide bond formation. It has been suggested to have peptidyltransferase activity; this is somewhat controversial. Makes several contacts with the 16S rRNA in the 70S ribosome. This chain is Large ribosomal subunit protein uL2, found in Legionella pneumophila (strain Lens).